The sequence spans 307 residues: Protoheme IX farnesyltransferase (307 aa).

A run of 8 helical transmembrane segments spans residues 32 to 52 (MGIV…ALHF), 65 to 85 (FFTI…NNYI), 108 to 128 (PGFA…FLLL), 131 to 151 (PMAV…YTLW), 158 to 178 (LNTV…WAAI), 186 to 206 (IAWM…LALA), 251 to 271 (LGIT…ALGL), and 287 to 307 (FVYS…VTFF).

It belongs to the UbiA prenyltransferase family. Protoheme IX farnesyltransferase subfamily. Interacts with CtaA.

The protein localises to the cell membrane. It carries out the reaction heme b + (2E,6E)-farnesyl diphosphate + H2O = Fe(II)-heme o + diphosphate. It participates in porphyrin-containing compound metabolism; heme O biosynthesis; heme O from protoheme: step 1/1. Converts heme B (protoheme IX) to heme O by substitution of the vinyl group on carbon 2 of heme B porphyrin ring with a hydroxyethyl farnesyl side group. The polypeptide is Protoheme IX farnesyltransferase (Bacillus mycoides (strain KBAB4) (Bacillus weihenstephanensis)).